A 38-amino-acid chain; its full sequence is Large ribosomal subunit protein bL36 (38 aa).

This sequence belongs to the bacterial ribosomal protein bL36 family.

In Lactobacillus acidophilus (strain ATCC 700396 / NCK56 / N2 / NCFM), this protein is Large ribosomal subunit protein bL36.